The sequence spans 223 residues: Membrane-associated progesterone receptor component 2 (223 aa).

Residues 1 to 33 form a disordered region; it reads MAAGDGDVKLGTLGSGSESSNDGGSESPGDAGA. An O-linked (Xyl...) (chondroitin sulfate) serine glycan is attached at Ser15. Low complexity predominate over residues 15–33; it reads SGSESSNDGGSESPGDAGA. The chain crosses the membrane as a helical span at residues 42-66; sequence AAALALLTGGGEMLLNVALVALVLL. Residues Ser90, Ser104, and Ser208 each carry the phosphoserine modification. One can recognise a Cytochrome b5 heme-binding domain in the interval 102 to 201; the sequence is DFSLEQLRQY…EKYDYVGRLL (100 aa). Positions 202-223 are disordered; the sequence is KPGEEPSEYTDEEDTKDHNKQD. Positions 206–215 are enriched in acidic residues; it reads EPSEYTDEED. Position 210 is a phosphotyrosine (Tyr210). Thr211 carries the phosphothreonine modification.

Belongs to the cytochrome b5 family. MAPR subfamily. In terms of assembly, interacts with PGRMC1. Interacts with AAAS. As to expression, expressed by endometrial glands and stroma (at protein level). Detected in urine (at protein level).

It localises to the membrane. It is found in the nucleus envelope. Its subcellular location is the endoplasmic reticulum. The protein resides in the secreted. Required for the maintenance of uterine histoarchitecture and normal female reproductive lifespan. May serve as a universal non-classical progesterone receptor in the uterus. Intracellular heme chaperone required for delivery of labile, or signaling heme, to the nucleus. Plays a role in adipocyte function and systemic glucose homeostasis. In brown fat, which has a high demand for heme, delivery of labile heme in the nucleus regulates the activity of heme-responsive transcriptional repressors such as NR1D1 and BACH1. The polypeptide is Membrane-associated progesterone receptor component 2 (Homo sapiens (Human)).